Reading from the N-terminus, the 259-residue chain is MPEDILVDIKRDYVLSKLRDNERIDGRGFDEFRKVEIIPNVIEKAEGSALVKLGDTQVVVGVKMQPGEPYPDTPDRGVIIVNAELVPLASPTFEPGPPDENSIELARVVDRGIRESEAVDLSKLVIEEGEKVWIVFVDIHALDDDGNLLDASALAAIAALMNTKVPAERFDLGEDYLLPVRDLPVSVTSLIVGNKYLVDPSREEMSVGDTTLTITTDKDDNVVAMQKSGGYLLDEKLFDELLDVSINCARKLREKFKEI.

This sequence belongs to the RNase PH family. Rrp42 subfamily. As to quaternary structure, component of the archaeal exosome complex. Forms a hexameric ring-like arrangement composed of 3 Rrp41-Rrp42 heterodimers. The hexameric ring associates with a trimer of Rrp4 and/or Csl4 subunits.

Its subcellular location is the cytoplasm. Its function is as follows. Non-catalytic component of the exosome, which is a complex involved in RNA degradation. Contributes to the structuring of the Rrp41 active site. This is Exosome complex component Rrp42 from Archaeoglobus fulgidus (strain ATCC 49558 / DSM 4304 / JCM 9628 / NBRC 100126 / VC-16).